Consider the following 837-residue polypeptide: Outer membrane usher protein PsaC (837 aa).

An N-terminal signal peptide occupies residues 1 to 23; it reads MKKLIVQFTTITLLMSTSFLVGA.

Belongs to the fimbrial export usher family.

The protein resides in the cell outer membrane. Functionally, involved in the export and assembly of PsaA (pH 6) fimbrial subunits across the outer membrane. The chain is Outer membrane usher protein PsaC (psaC) from Yersinia pestis.